Here is a 288-residue protein sequence, read N- to C-terminus: Urease accessory protein UreD (288 aa).

It belongs to the UreD family. UreD, UreF and UreG form a complex that acts as a GTP-hydrolysis-dependent molecular chaperone, activating the urease apoprotein by helping to assemble the nickel containing metallocenter of UreC. The UreE protein probably delivers the nickel.

It localises to the cytoplasm. Required for maturation of urease via the functional incorporation of the urease nickel metallocenter. In Dechloromonas aromatica (strain RCB), this protein is Urease accessory protein UreD.